A 278-amino-acid polypeptide reads, in one-letter code: Para-Rep C1 (278 aa).

The CRESS-DNA virus Rep endonuclease domain maps to 1–95 (MACSNWVFTR…VAGPWSYGDL (95 aa)). Residues 8 to 11 (FTRN) carry the RCR-1 motif. Positions 33 and 39 each coordinate a divalent metal cation. The short motif at 39–41 (HIQ) is the RCR-2 element. Residues 48 to 69 (KKARFSTVKEIIGGNPHVEKMK) carry the Nuclear localization signal motif. The For DNA cleavage activity role is filled by Y78. The RCR-3 motif lies at 78 to 81 (YVQK). E83 is an a divalent metal cation binding site. A Nuclear localization signal motif is present at residues 95-101 (LLKRGSH). 176-178 (GKS) contacts ATP.

It belongs to the nanoviridea/circoviridae replication-associated protein family. In terms of assembly, homooligomer (Potential). Rep binds to repeated DNA motifs (iterons). Mg(2+) serves as cofactor. Mn(2+) is required as a cofactor.

It is found in the host nucleus. It catalyses the reaction ATP + H2O = ADP + phosphate + H(+). Initiates and terminates the replication only of its own subviral DNA molecule. The closed circular ssDNA genome is first converted to a superhelical dsDNA. Rep binds a specific hairpin at the genome origin of replication. Introduces an endonucleolytic nick within the intergenic region of the genome, thereby initiating the rolling circle replication (RCR). Following cleavage, binds covalently to the 5'-phosphate of DNA as a tyrosyl ester. The cleavage gives rise to a free 3'-OH that serves as a primer for the cellular DNA polymerase. The polymerase synthesizes the (+) strand DNA by rolling circle mechanism. After one round of replication, a Rep-catalyzed nucleotidyl transfer reaction releases a circular single-stranded virus genome, thereby terminating the replication. Displays origin-specific DNA cleavage, nucleotidyl transferase, ATPase and helicase activities. The chain is Para-Rep C1 (C1) from Faba bean necrotic yellows C1 alphasatellite (FBNYC1A).